The following is a 679-amino-acid chain: Protein polyglycylase TTLL10 (679 aa).

The segment covering 1–15 has biased composition (basic residues); it reads MPLHPPARRPHGHRR. Disordered stretches follow at residues 1–33, 49–77, and 96–124; these read MPLHPPARRPHGHRRNGSEAQTEATTQDTGRLS, GHRAARRPRRGVGTTSASRAPRPGALMPA, and VSFKRPKRSRTHQSHTKVPGWTHEKRMGS. The span at 18–30 shows a compositional bias: polar residues; it reads SEAQTEATTQDTG. The segment covering 96 to 110 has biased composition (basic residues); that stretch reads VSFKRPKRSRTHQSH. The TTL domain occupies 172–543; that stretch reads QGPFFYIGGT…TCQKSLHSQK (372 aa). Residues Lys304, 310 to 311, 353 to 356, 366 to 368, and 409 to 410 each bind ATP; these read QG, QRYV, KFD, and TN. Gln310 contributes to the a protein binding site. 3 residues coordinate Mg(2+): Asp489, Glu502, and Asn504. A disordered region spans residues 605-679; sequence DRPAARKSMS…EQRSTSHRGS (75 aa).

Mg(2+) is required as a cofactor.

It is found in the cytoplasm. The protein resides in the cytoskeleton. Its subcellular location is the cell projection. It localises to the cilium. The protein localises to the cilium axoneme. The catalysed reaction is (glycyl)(n)-glycyl-L-glutamyl-[protein] + glycine + ATP = (glycyl)(n+1)-glycyl-L-glutamyl-[protein] + ADP + phosphate + H(+). Functionally, polyglycylase which modifies both tubulin and non-tubulin proteins, generating polyglycine side chains of variable lengths on the gamma-carboxyl groups of specific glutamate residues of target proteins. Involved in the elongation step rather than the initiation step of the polyglycylation reaction. Polyglycylates alpha-tubulin and beta-tubulin. Polyglycylates non-tubulin proteins such as nucleosome assembly protein NAP1. The polypeptide is Protein polyglycylase TTLL10 (Rattus norvegicus (Rat)).